Consider the following 179-residue polypeptide: Ribosome maturation factor RimM (179 aa).

In terms of domain architecture, PRC barrel spans 95 to 174 (KDEFFYFDIL…QIFCTQDAFL (80 aa)).

This sequence belongs to the RimM family. Binds ribosomal protein uS19.

The protein localises to the cytoplasm. Functionally, an accessory protein needed during the final step in the assembly of 30S ribosomal subunit, possibly for assembly of the head region. Essential for efficient processing of 16S rRNA. May be needed both before and after RbfA during the maturation of 16S rRNA. It has affinity for free ribosomal 30S subunits but not for 70S ribosomes. This Campylobacter jejuni subsp. jejuni serotype O:2 (strain ATCC 700819 / NCTC 11168) protein is Ribosome maturation factor RimM.